Reading from the N-terminus, the 69-residue chain is Amphipathic peptide CT2 (69 aa).

The signal sequence occupies residues 1–23 (MKTQFVILIVAVVLLQLIANSEA). A Phenylalanine amide modification is found at Phe36. A propeptide spanning residues 40-69 (GLRNLDNLDDDIFEPEMSEADLRYLQDLLR) is cleaved from the precursor.

Belongs to the non-disulfide-bridged peptide (NDBP) superfamily. Short antimicrobial peptide (group 4) family. Expressed by the venom gland.

The protein resides in the secreted. Its subcellular location is the target cell membrane. In terms of biological role, amphipathic peptide that shows antibacterial activities against both Gram-positive (MIC=10 uM, 20 uM and 20 uM against S.aureus, B.subtilis and S.agalactiae, respectively) and Gram-negative bacteria (MIC=20 uM, 10 uM, and 10 uM against E.coli, S.typhi, and P.aeruginosa, respectively). Is mildly hemolytic at its MIC range, but shows a strong cytotoxic activity at higher concentrations, reaching 84% lysis at 50 uM. This is Amphipathic peptide CT2 from Vaejovis mexicanus smithi (Mexican scorpion).